The following is a 95-amino-acid chain: Aspartyl/glutamyl-tRNA(Asn/Gln) amidotransferase subunit C (95 aa).

It belongs to the GatC family. As to quaternary structure, heterotrimer of A, B and C subunits.

It carries out the reaction L-glutamyl-tRNA(Gln) + L-glutamine + ATP + H2O = L-glutaminyl-tRNA(Gln) + L-glutamate + ADP + phosphate + H(+). It catalyses the reaction L-aspartyl-tRNA(Asn) + L-glutamine + ATP + H2O = L-asparaginyl-tRNA(Asn) + L-glutamate + ADP + phosphate + 2 H(+). In terms of biological role, allows the formation of correctly charged Asn-tRNA(Asn) or Gln-tRNA(Gln) through the transamidation of misacylated Asp-tRNA(Asn) or Glu-tRNA(Gln) in organisms which lack either or both of asparaginyl-tRNA or glutaminyl-tRNA synthetases. The reaction takes place in the presence of glutamine and ATP through an activated phospho-Asp-tRNA(Asn) or phospho-Glu-tRNA(Gln). This Pseudomonas fluorescens (strain ATCC BAA-477 / NRRL B-23932 / Pf-5) protein is Aspartyl/glutamyl-tRNA(Asn/Gln) amidotransferase subunit C.